The following is a 440-amino-acid chain: 3-phosphoshikimate 1-carboxyvinyltransferase (440 aa).

Residues Lys-26, Ser-27, and Arg-31 each coordinate 3-phosphoshikimate. Lys-26 serves as a coordination point for phosphoenolpyruvate. Residues Gly-100 and Arg-134 each contribute to the phosphoenolpyruvate site. Positions 180, 181, 182, 208, 323, 346, and 350 each coordinate 3-phosphoshikimate. Gln-182 is a binding site for phosphoenolpyruvate. Residue Asp-323 is the Proton acceptor of the active site. Phosphoenolpyruvate-binding residues include Arg-354, Arg-398, and Lys-423.

This sequence belongs to the EPSP synthase family. Monomer.

Its subcellular location is the cytoplasm. It carries out the reaction 3-phosphoshikimate + phosphoenolpyruvate = 5-O-(1-carboxyvinyl)-3-phosphoshikimate + phosphate. Its pathway is metabolic intermediate biosynthesis; chorismate biosynthesis; chorismate from D-erythrose 4-phosphate and phosphoenolpyruvate: step 6/7. Functionally, catalyzes the transfer of the enolpyruvyl moiety of phosphoenolpyruvate (PEP) to the 5-hydroxyl of shikimate-3-phosphate (S3P) to produce enolpyruvyl shikimate-3-phosphate and inorganic phosphate. This chain is 3-phosphoshikimate 1-carboxyvinyltransferase, found in Pasteurella multocida (strain Pm70).